Reading from the N-terminus, the 147-residue chain is Protein-export protein SecB 2 (147 aa).

It belongs to the SecB family. Homotetramer, a dimer of dimers. One homotetramer interacts with 1 SecA dimer.

It is found in the cytoplasm. Its function is as follows. One of the proteins required for the normal export of preproteins out of the cell cytoplasm. It is a molecular chaperone that binds to a subset of precursor proteins, maintaining them in a translocation-competent state. It also specifically binds to its receptor SecA. The sequence is that of Protein-export protein SecB 2 from Francisella tularensis subsp. novicida (strain U112).